The sequence spans 529 residues: Non-reducing end alpha-L-arabinofuranosidase BoGH43B (529 aa).

Residues 1 to 23 (MMKNSCRLLLILIGLWMANVSLA) form the signal peptide. Aspartate 38 (proton acceptor) is an active-site residue. The active-site Proton donor is the glutamate 198.

The protein belongs to the glycosyl hydrolase 43 family.

It localises to the periplasm. It carries out the reaction Hydrolysis of terminal non-reducing alpha-L-arabinofuranoside residues in alpha-L-arabinosides.. Its pathway is glucan metabolism; xyloglucan degradation. In terms of biological role, alpha-L-arabinofuranosidase involved in xyloglucan degradation by mediating the cleavage of terminal non-reducing alpha-L-arabinofuranoside residues in xyloglucan branches, converting the 'S' units to 'X' units. In Bacteroides ovatus (strain ATCC 8483 / DSM 1896 / JCM 5824 / BCRC 10623 / CCUG 4943 / NCTC 11153), this protein is Non-reducing end alpha-L-arabinofuranosidase BoGH43B.